The primary structure comprises 178 residues: Caveolin-1 (178 aa).

Serine 2 carries the post-translational modification N-acetylserine. Serine 2 is modified (phosphoserine). Residues 2 to 94 (SGGKYVDSEG…WKASFTTFTV (93 aa)) are required for homooligomerization. Residues 2–104 (SGGKYVDSEG…TKYWFYRLLS (103 aa)) are Cytoplasmic-facing. The residue at position 5 (lysine 5) is an N6-acetyllysine; alternate. Residue lysine 5 forms a Glycyl lysine isopeptide (Lys-Gly) (interchain with G-Cter in ubiquitin); alternate linkage. Tyrosine 6 bears the Phosphotyrosine mark. Serine 9 bears the Phosphoserine mark. Residue tyrosine 14 is modified to Phosphotyrosine; by ABL1. Position 25 is a phosphotyrosine (tyrosine 25). Residues lysine 26, lysine 30, lysine 39, lysine 47, and lysine 57 each participate in a glycyl lysine isopeptide (Lys-Gly) (interchain with G-Cter in ubiquitin) cross-link. Residues 82-94 (DGIWKASFTTFTV) are interaction with CAVIN3. The helical intramembrane region spans 105–125 (ALFGIPMALIWGIYFAILSFL). The Cytoplasmic portion of the chain corresponds to 126–178 (HIWAVVPCIKSFLIEIQCVSRVYSIYVHTFCDPFFEAVGKIFSSIRINMQKEI). The segment at 131–142 (VPCIKSFLIEIQ) is interacts with SPRY1, SPRY2, SPRY3 and SPRY4. Residues cysteine 133, cysteine 143, and cysteine 156 are each lipidated (S-palmitoyl cysteine). The interacts with SPRY1, SPRY2, and SPRY4 stretch occupies residues 149-160 (SIYVHTFCDPFF). The interval 167–178 (FSSIRINMQKEI) is interacts with SPRY1, SPRY2, SPRY3 and SPRY4.

This sequence belongs to the caveolin family. Homooligomer. Interacts with GLIPR2. Interacts with NOSTRIN. Interacts with SNAP25 and STX1A. Interacts (via the N-terminus) with DPP4; the interaction is direct. Interacts with CTNNB1, CDH1 and JUP. Interacts with PACSIN2; this interaction induces membrane tubulation. Interacts with SLC7A9. Interacts with BMX and BTK. Interacts with TGFBR1. Interacts with CAVIN3 (via leucine-zipper domain) in a cholesterol-sensitive manner. Interacts with CAVIN1. Interacts with EHD2 in a cholesterol-dependent manner. Forms a ternary complex with UBXN6 and VCP; mediates CAV1 targeting to lysosomes for degradation. Interacts with ABCG1; this interaction regulates ABCG1-mediated cholesterol efflux. Interacts with NEU3; this interaction enhances NEU3 sialidase activity within caveola. Interacts (via C-terminus) with SPRY1, SPRY2 (via C-terminus), SPRY3, and SPRY4. Interacts with IGFBP5; this interaction allows trafficking of IGFBP5 from the plasma membrane to the nucleus. Phosphorylated at Tyr-14 by ABL1 in response to oxidative stress. In terms of processing, ubiquitinated. Undergo monoubiquitination and multi- and/or polyubiquitination. Monoubiquitination of N-terminal lysines promotes integration in a ternary complex with UBXN6 and VCP which promotes oligomeric CAV1 targeting to lysosomes for degradation. Ubiquitinated by ZNRF1; leading to degradation and modulation of the TLR4-mediated immune response.

Its subcellular location is the golgi apparatus membrane. The protein resides in the cell membrane. The protein localises to the membrane. It is found in the caveola. It localises to the membrane raft. Its function is as follows. May act as a scaffolding protein within caveolar membranes. Forms a stable heterooligomeric complex with CAV2 that targets to lipid rafts and drives caveolae formation. Mediates the recruitment of CAVIN proteins (CAVIN1/2/3/4) to the caveolae. Interacts directly with G-protein alpha subunits and can functionally regulate their activity. Involved in the costimulatory signal essential for T-cell receptor (TCR)-mediated T-cell activation. Its binding to DPP4 induces T-cell proliferation and NF-kappa-B activation in a T-cell receptor/CD3-dependent manner. Recruits CTNNB1 to caveolar membranes and may regulate CTNNB1-mediated signaling through the Wnt pathway. Negatively regulates TGFB1-mediated activation of SMAD2/3 by mediating the internalization of TGFBR1 from membrane rafts leading to its subsequent degradation. Binds 20(S)-hydroxycholesterol (20(S)-OHC). In Mustela putorius furo (European domestic ferret), this protein is Caveolin-1 (CAV1).